A 132-amino-acid chain; its full sequence is Large ribosomal subunit protein uL24 (132 aa).

This sequence belongs to the universal ribosomal protein uL24 family. In terms of assembly, part of the 50S ribosomal subunit.

One of two assembly initiator proteins, it binds directly to the 5'-end of the 23S rRNA, where it nucleates assembly of the 50S subunit. In terms of biological role, located at the polypeptide exit tunnel on the outside of the subunit. The protein is Large ribosomal subunit protein uL24 of Aeropyrum pernix (strain ATCC 700893 / DSM 11879 / JCM 9820 / NBRC 100138 / K1).